We begin with the raw amino-acid sequence, 182 residues long: Protein LURP-one-related 7 (182 aa).

The protein belongs to the LOR family.

Might be related to the phospholipid scramblase and tubby-like superfamily of membrane tethered transcription factors. This Arabidopsis thaliana (Mouse-ear cress) protein is Protein LURP-one-related 7.